Reading from the N-terminus, the 900-residue chain is DNA polymerase nu (900 aa).

A compositionally biased stretch (basic and acidic residues) spans 60-75; the sequence is LEDRKTQSPEKKDLKS. Disordered stretches follow at residues 60-90 and 863-900; these read LEDR…LSPQ and GPPP…SFCL. Polar residues predominate over residues 76–90; that stretch reads LRSQTSRGSAKLSPQ.

This sequence belongs to the DNA polymerase type-A family. Interacts with FANCD2, FANCI, PCNA, RAD51 and HELQ. In terms of tissue distribution, highly expressed in testis and heart. Weakly expressed in skeletal muscle.

Its subcellular location is the nucleus. The catalysed reaction is DNA(n) + a 2'-deoxyribonucleoside 5'-triphosphate = DNA(n+1) + diphosphate. With respect to regulation, inhibited by ddTTP. DNA polymerase with very low fidelity that catalyzes considerable misincorporation by inserting dTTP opposite a G template, and dGTP opposite a T template. Is the least accurate of the DNA polymerase A family (i.e. POLG, POLN and POLQ). Can perform accurate translesion DNA synthesis (TLS) past a 5S-thymine glycol. Can perform efficient strand displacement past a nick or a gap and gives rise to an amount of product similar to that on non-damaged template. Has no exonuclease activity. Error-prone DNA polymerase that preferentially misincorporates dT regardless of template sequence. May play a role in TLS during interstrand cross-link (ICL) repair. May be involved in TLS when genomic replication is blocked by extremely large major groove DNA lesions. May function in the bypass of some DNA-protein and DNA-DNA cross-links. May have a role in cellular tolerance to DNA cross-linking agents. Involved in the repair of DNA cross-links and double-strand break (DSB) resistance. Participates in FANCD2-mediated repair. Forms a complex with HELQ helicase that participates in homologous recombination (HR) repair and is essential for cellular protection against DNA cross-links. This chain is DNA polymerase nu (POLN), found in Homo sapiens (Human).